Consider the following 79-residue polypeptide: Delta-hormotoxin-Cpt1b (79 aa).

The N-terminal stretch at 1-20 (MKTQVLALFVLCVLFCLAES) is a signal peptide. Residues 21-31 (RTTLNKRNDIE) constitute a propeptide that is removed on maturation. 3 disulfide bridges follow: Cys-36-Cys-75, Cys-38-Cys-66, and Cys-56-Cys-76.

The protein belongs to the sea anemone sodium channel inhibitory toxin family.

The protein localises to the secreted. The protein resides in the nematocyst. Its function is as follows. In neuromuscular preparation of crustaceans, the toxin increased neurotransmitter release, causing repetitive firing of the axons. May affect sodium channels (Nav). The chain is Delta-hormotoxin-Cpt1b from Calliactis parasitica (Sea anemone).